The sequence spans 142 residues: Transcriptional regulator MraZ (142 aa).

2 SpoVT-AbrB domains span residues 5 to 51 (ASSL…PRPV) and 77 to 120 (ASDV…DATK).

This sequence belongs to the MraZ family. Forms oligomers.

It is found in the cytoplasm. The protein localises to the nucleoid. The protein is Transcriptional regulator MraZ of Janthinobacterium sp. (strain Marseille) (Minibacterium massiliensis).